The chain runs to 712 residues: Sesterterpene synthase btcA (712 aa).

The interval Met-1–Trp-332 is terpene cyclase. Asp-96 is a binding site for Mg(2+). Residues Asp-96, Asn-234, Ser-238–Glu-242, and Arg-328–His-329 contribute to the substrate site. The short motif at Asp-96–Asp-100 is the DDXXD 1 element. Residues Asn-234–Glu-242 carry the NSE/DTE motif. The interval Arg-333 to Ser-706 is prenyltransferase. The interval Asp-334–Ala-373 is disordered. Low complexity-rich tracts occupy residues Ser-340–Glu-349 and Ser-361–Ala-373. Isopentenyl diphosphate contacts are provided by Lys-414, Arg-417, and His-446. Residues Asp-453 and Asp-457 each coordinate Mg(2+). Positions Asp-453–Asp-457 match the DDXXD 2 motif. Arg-462 provides a ligand contact to dimethylallyl diphosphate. Arg-463 is a binding site for isopentenyl diphosphate. Dimethylallyl diphosphate-binding residues include Lys-540, Thr-541, Gln-580, Asn-587, Lys-597, and Lys-607.

The protein in the N-terminal section; belongs to the terpene synthase family. It in the C-terminal section; belongs to the FPP/GGPP synthase family. In terms of assembly, hexamer. The cofactor is Mg(2+).

The enzyme catalyses isopentenyl diphosphate + (2E,6E)-farnesyl diphosphate = (2E,6E,10E)-geranylgeranyl diphosphate + diphosphate. The catalysed reaction is isopentenyl diphosphate + (2E,6E,10E)-geranylgeranyl diphosphate = (2E,6E,10E,14E)-geranylfarnesyl diphosphate + diphosphate. The protein operates within secondary metabolite biosynthesis; terpenoid biosynthesis. Its function is as follows. Bifunctional terpene synthase; part of the gene cluster that mediates the biosynthesis of betaestacins. The bifunctional terpene synthase btcA converts isopentenyl diphosphate (IPP) and dimethylallyl diphosphate (DMAPP) into the sesterterpene betaestacin I. The C-terminal prenyltransferase (PT) domain of btcA catalyzes formation of GFPP, whereas the N-terminal terpene cyclase (TC) domain catalyzes the cyclization of GFPP into betaestacin I. The cytochrome P450 monooxygenase btcB oxidizes the C25 methyl group of betaestacin I to yield the carboxylic acid betaestacin IV via the alcohol betaestacin III. The cytochrome P450 monooxygenase btcC further catalyzes the multistep oxidation of betaestacin IV to produce several compounds, including betaestacins Va, Vb, Vc and VI. The protein is Sesterterpene synthase btcA of Colletotrichum orbiculare (strain 104-T / ATCC 96160 / CBS 514.97 / LARS 414 / MAFF 240422) (Cucumber anthracnose fungus).